A 240-amino-acid chain; its full sequence is Ribosomal RNA small subunit methyltransferase I (240 aa).

The protein belongs to the methyltransferase superfamily. RsmI family.

It localises to the cytoplasm. It carries out the reaction cytidine(1402) in 16S rRNA + S-adenosyl-L-methionine = 2'-O-methylcytidine(1402) in 16S rRNA + S-adenosyl-L-homocysteine + H(+). Its function is as follows. Catalyzes the 2'-O-methylation of the ribose of cytidine 1402 (C1402) in 16S rRNA. The polypeptide is Ribosomal RNA small subunit methyltransferase I (Leptospira biflexa serovar Patoc (strain Patoc 1 / ATCC 23582 / Paris)).